Consider the following 639-residue polypeptide: Extracellular metalloproteinase mep (639 aa).

Residues 1–16 form the signal peptide; it reads MHMLSFIGALALPVFV. A propeptide spanning residues 17–245 is cleaved from the precursor; it reads CAQSCEPASL…IHGVVDYISE (229 aa). N287, N320, N336, and N368 each carry an N-linked (GlcNAc...) asparagine glycan. Zn(2+) is bound at residue H429. E430 is an active-site residue. Zn(2+) is bound at residue H433. An N-linked (GlcNAc...) asparagine glycan is attached at N509.

This sequence belongs to the peptidase M36 family. It depends on Zn(2+) as a cofactor.

The protein resides in the secreted. Functionally, secreted metalloproteinase that allows assimilation of proteinaceous substrates. The polypeptide is Extracellular metalloproteinase mep (mep) (Aspergillus flavus (strain ATCC 200026 / FGSC A1120 / IAM 13836 / NRRL 3357 / JCM 12722 / SRRC 167)).